A 319-amino-acid polypeptide reads, in one-letter code: ATP-dependent 6-phosphofructokinase (319 aa).

An ATP-binding site is contributed by Gly-11. 21–25 (RAVVR) is a binding site for ADP. Residues 72–73 (RC) and 102–105 (GDGS) each bind ATP. Residue Asp-103 coordinates Mg(2+). A substrate-binding site is contributed by 125–127 (TID). Catalysis depends on Asp-127, which acts as the Proton acceptor. Arg-154 is a binding site for ADP. Substrate contacts are provided by residues Arg-162 and 169-171 (MGR). ADP is bound by residues 185–187 (GAE), Lys-211, and 213–215 (KMH). Substrate is bound by residues Glu-222, Arg-243, and 249-252 (HIQR).

The protein belongs to the phosphofructokinase type A (PFKA) family. ATP-dependent PFK group I subfamily. Prokaryotic clade 'B1' sub-subfamily. Homotetramer. Mg(2+) serves as cofactor.

The protein resides in the cytoplasm. The catalysed reaction is beta-D-fructose 6-phosphate + ATP = beta-D-fructose 1,6-bisphosphate + ADP + H(+). It participates in carbohydrate degradation; glycolysis; D-glyceraldehyde 3-phosphate and glycerone phosphate from D-glucose: step 3/4. Its activity is regulated as follows. Allosterically activated by ADP and other diphosphonucleosides, and allosterically inhibited by phosphoenolpyruvate. Its function is as follows. Catalyzes the phosphorylation of D-fructose 6-phosphate to fructose 1,6-bisphosphate by ATP, the first committing step of glycolysis. The chain is ATP-dependent 6-phosphofructokinase from Clostridium botulinum (strain 657 / Type Ba4).